A 101-amino-acid chain; its full sequence is Gamma-secretase subunit PEN-2 (101 aa).

The Cytoplasmic portion of the chain corresponds to 1–17 (MNLERVSNEEKLNLCRK). An intramembrane region (helical) is located at residues 18-36 (YYLGGFAFLPFLWLVNIFW). Topologically, residues 37–57 (FFKEAFFAPAYTEQSQIKGYV) are cytoplasmic. A helical membrane pass occupies residues 58 to 78 (WRSAVGFLFWVIVLTTWITIF). The Lumenal segment spans residues 79-101 (QIYRPRWGALGDYLSFTIPLGTP).

The protein belongs to the PEN-2 family. As to quaternary structure, the functional gamma-secretase complex is composed of at least four polypeptides: a presenilin homodimer (PSEN1 or PSEN2), nicastrin (NCSTN), APH1 (APH1A or APH1B) and PSENEN.

Its subcellular location is the endoplasmic reticulum membrane. It localises to the golgi apparatus. The protein localises to the golgi stack membrane. It is found in the cell membrane. The protein resides in the membrane. In terms of biological role, essential subunit of the gamma-secretase complex, an endoprotease complex that catalyzes the intramembrane cleavage of integral membrane proteins such as Notch receptors and APP (amyloid-beta precursor protein). The gamma-secretase complex plays a role in Notch and Wnt signaling cascades and regulation of downstream processes via its role in processing key regulatory proteins, and by regulating cytosolic CTNNB1 levels. PSENEN modulates both endoproteolysis of presenilin and gamma-secretase activity. In Rattus norvegicus (Rat), this protein is Gamma-secretase subunit PEN-2 (Psenen).